Consider the following 449-residue polypeptide: MPPKVKIKNDFEIFRKELEILYKKYLNNELSYLKLKEKLKILAENHKAILFRKDKFTNRSIILNLSKTRKIIKEYINLSVIERIRRDNTFLFFWKSRRIKELKNIGIKDRKKIEELIFSNQMNDEKSYFQYFIDLFVTPKWLNDYAHKYKIEKINSYRKEQIFVKINLNTYIEIIKLLLNQSRDIRLKFYGVLMAIGRRPVEVMKLSQFYIADKNHIRMEFIAKKRENNIVNEVVFPVFADPELIINSIKEIRYMEQTENLTKEIISSNLAYSYNRLFRQIFNNIFAPEESVYFCRAIYCKFSYLAFAPKNMEMNYWITKVLGHEPNDITTAFHYNRYVLDNLDDKADNSLLTLLNQRIYTYVRRKATYSTLTMDRLESLIKEHHIFDDNYIKTLIVIKNLMLKDNLETLAMVRGLNVKIRKAFKATYGYNYNYIKLTEYLSIIFNYKL.

No cofactors were found to be necessary. serves as cofactor.

It localises to the cytoplasm. The protein resides in the nucleoid. Its function is as follows. Catalyzes the conservative, sequence-specific DNA breakage and reunion reaction that generates two hairpin telomeres from a replicated telomere substrate. Breaks two phosphodiester bonds in a single DNA duplex and joins each end with the opposite DNA strand to form covalently closed hairpin telomeres. In vitro relaxed-circular, open-circular and linearized plasmids, but not supercoiled DNA, are all substrates. Cleavage is position-dependent relative to conserved sequence elements. This is Telomere resolvase ResT from Borreliella burgdorferi (strain ATCC 35210 / DSM 4680 / CIP 102532 / B31) (Borrelia burgdorferi).